We begin with the raw amino-acid sequence, 664 residues long: Prelamin-A/C (664 aa).

An N-acetylmethionine modification is found at methionine 1. The segment at 1 to 24 (METPSQRRATRSGAQASSTPLSPT) is disordered. Positions 1 to 33 (METPSQRRATRSGAQASSTPLSPTRITRLQEKE) are head. An interaction with MLIP region spans residues 1 to 130 (METPSQRRAT…TKKEGDLMAA (130 aa)). Threonine 3 is modified (phosphothreonine). Serine 5 is subject to Phosphoserine. Threonine 10 is modified (phosphothreonine). Phosphoserine is present on residues serine 12 and serine 18. Threonine 19 bears the Phosphothreonine mark. Serine 22 carries the phosphoserine modification. The IF rod domain occupies 31 to 387 (EKEDLQELND…KLLEGEEERL (357 aa)). Lysine 32 carries the N6-acetyllysine; alternate modification. Lysine 32 carries the post-translational modification N6-succinyllysine; alternate. Lysine 32 participates in a covalent cross-link: Glycyl lysine isopeptide (Lys-Gly) (interchain with G-Cter in SUMO2); alternate. Residues 34–70 (DLQELNDRLAVYIDRVRSLETENAGLRLRITESEEVV) are coil 1A. Residues serine 51, serine 66, and serine 71 each carry the phosphoserine modification. The tract at residues 71-80 (SREVSGIKSA) is linker 1. N6-acetyllysine is present on residues lysine 78 and lysine 97. Residues 81–218 (YEAELGDARK…NIYSEELRET (138 aa)) form a coil 1B region. Residue lysine 97 forms a Glycyl lysine isopeptide (Lys-Gly) (interchain with G-Cter in SUMO2) linkage. Serine 107 is subject to Phosphoserine. Lysine 108, lysine 114, lysine 123, lysine 135, lysine 144, and lysine 155 each carry N6-acetyllysine. N6-acetyllysine; alternate is present on lysine 171. Lysine 171 is subject to N6-succinyllysine; alternate. Lysine 171 participates in a covalent cross-link: Glycyl lysine isopeptide (Lys-Gly) (interchain with G-Cter in SUMO2); alternate. Residues lysine 180, lysine 201, and lysine 208 each carry the N6-acetyllysine modification. Residue lysine 201 forms a Glycyl lysine isopeptide (Lys-Gly) (interchain with G-Cter in SUMO2); alternate linkage. Lysine 201 is covalently cross-linked (Glycyl lysine isopeptide (Lys-Gly) (interchain with G-Cter in SUMO); alternate). Lysine 208 is covalently cross-linked (Glycyl lysine isopeptide (Lys-Gly) (interchain with G-Cter in SUMO2)). Serine 212 bears the Phosphoserine mark. Glycyl lysine isopeptide (Lys-Gly) (interchain with G-Cter in SUMO2) cross-links involve residues lysine 219 and lysine 233. The linker 2 stretch occupies residues 219–242 (KRRHETRLVEIDNGKQREFESRLA). N6-acetyllysine is present on residues lysine 233, lysine 260, lysine 265, and lysine 270. A coil 2 region spans residues 243–383 (DALQDLRAQH…HAYRKLLEGE (141 aa)). Lysine 260 participates in a covalent cross-link: Glycyl lysine isopeptide (Lys-Gly) (interchain with G-Cter in SUMO2); alternate. A Glycyl lysine isopeptide (Lys-Gly) (interchain with G-Cter in SUMO2); alternate cross-link involves residue lysine 270. 4 positions are modified to phosphoserine: serine 277, serine 282, serine 301, and serine 307. Lysine 311 participates in a covalent cross-link: Glycyl lysine isopeptide (Lys-Gly) (interchain with G-Cter in SUMO2); alternate. N6-acetyllysine occurs at positions 311, 316, and 341. Residues lysine 366 and lysine 378 each participate in a glycyl lysine isopeptide (Lys-Gly) (interchain with G-Cter in SUMO2) cross-link. Residues 384–442 (EERLRLSPSPTSQRSRGRASSHSSQTQSGGSVTKKRKLESSESRSSFSQHARTSGRVAV) form a disordered region. The tail stretch occupies residues 384 to 664 (EERLRLSPSP…TQSPQNCSIM (281 aa)). Phosphoserine is present on residues serine 390, serine 392, serine 395, serine 398, serine 403, serine 404, serine 406, serine 407, and serine 414. The segment covering 403–414 (SSHSSQTQSGGS) has biased composition (low complexity). A Phosphothreonine modification is found at threonine 416. Lysine 417 is modified (N6-acetyllysine). Glycyl lysine isopeptide (Lys-Gly) (interchain with G-Cter in SUMO2) cross-links involve residues lysine 417 and lysine 420. The Nuclear localization signal signature appears at 417-422 (KKRKLE). Phosphoserine is present on residues serine 423, serine 426, serine 429, and serine 431. An LTD domain is found at 428-545 (SSFSQHARTS…EEVAMRKLVR (118 aa)). A Glycyl lysine isopeptide (Lys-Gly) (interchain with G-Cter in SUMO2); alternate cross-link involves residue lysine 450. Lysine 450 and lysine 457 each carry N6-acetyllysine. Phosphoserine occurs at positions 458 and 463. Residues lysine 470 and lysine 486 each participate in a glycyl lysine isopeptide (Lys-Gly) (interchain with G-Cter in SUMO2) cross-link. Lysine 486 is modified (N6-acetyllysine). Phosphothreonine occurs at positions 496 and 505. 2 positions are modified to phosphoserine: serine 533 and serine 546. Residue threonine 548 is modified to Phosphothreonine. Positions 555–577 (DEDGDDLLHHHHGSHGSSSGDPA) are disordered. Phosphoserine is present on residues serine 568 and serine 571. Lysine 597 participates in a covalent cross-link: Glycyl lysine isopeptide (Lys-Gly) (interchain with G-Cter in SUMO2); alternate. Residue lysine 597 forms a Glycyl lysine isopeptide (Lys-Gly) (interchain with G-Cter in SUMO1); alternate linkage. The disordered stretch occupies residues 598-620 (ASASSSGAQVGGSISSGSSASSV). 4 positions are modified to phosphoserine: serine 612, serine 613, serine 616, and serine 619. Residues serine 625 and serine 628 are each glycosylated (O-linked (GlcNAc) serine). Phosphoserine occurs at positions 628, 632, and 636. Residues 647 to 661 (LLGNSRPRTQSPQNC) constitute a propeptide, removed in Lamin-A/C form. The residue at position 661 (cysteine 661) is a Cysteine methyl ester. Residue cysteine 661 is the site of S-farnesyl cysteine attachment. The propeptide at 662-664 (SIM) is removed in Prelamin-A/C form and in Lamin-A/C form.

Belongs to the intermediate filament family. In terms of assembly, homodimer of lamin A and lamin C. Lamin dimers then assemble into dimeric head-to-tail polymers. Ultimately, two head-to-tail polymers assemble laterally into a protofilament with a uniformly shaped rod of 3.5 nm in diameter. Interacts with lamin-associated polypeptides IA, IB and TMPO-alpha, RB1 and with emerin. Interacts with SREBF1, SREBF2, SUN2 and TMEM43. Interacts with TMEM201. Proteolytically processed isoform A interacts with NARF. Interacts with SUN1. Interacts with MLIP. Interacts with DMPK; may regulate nuclear envelope stability. Interacts with SUV39H1; the interaction increases stability of SUV39H1. Interacts with SYNE2. Interacts with ITSN1 isoform 2. Interacts with IFFO1; enables the formation of an interior nucleoskeleton that is recruited to DNA double-strand breaks. Interacts with EMD. As to quaternary structure, interacts (via C-terminus) with LEMD2 (via N-terminus) (in vitro). Post-translationally, proteolytic cleavage of the C-terminal of 18 residues of prelamin-A/C results in the production of lamin-A/C. The prelamin-A/C maturation pathway includes farnesylation of CAAX motif by protein farnesyltransferase (FNTA and FNTB), removal of the last three amino acids (-AAX) by RCE1/FACE2 and/or ZMPSTE24, methylation of the C-terminal cysteine by ICMT and endoproteolytic removal of the last 15 C-terminal amino acids by ZMPSTE24. Proteolytic cleavage requires prior farnesylation and methylation, and absence of these blocks cleavage. In terms of processing, farnesylation of prelamin-A/C facilitates nuclear envelope targeting. Phosphorylation plays a key role in lamin organization, subcellular localization and nuclear envelope disintegration. Phosphorylation by CDK1 at Ser-22 and Ser-392 at the onset of mitosis drives lamin disassembly and nuclear envelope breakdown. Phosphorylation at Ser-22 and Ser-392 during interphase promotes localization to the nucleoplasm and regulates lamina assembly. Phosphorylation at Ser-22, Ser-392 and Ser-628 during interphase causes redistribution between the nucleus and the cytoplasm. Phosphorylation at Ser-22 by CDK1 regulates matrix stiffness. Phosphorylation status of Ser-22 determines its localization between double-strand break (DSB) sites and the nuclear matrix. Phosphorylated by ATR at Ser-282 in response to DNA damage, leading to lamin disassembly and nuclear envelope rupture. Phosphorylation also regulates stability in micronuclei arising from genome instability: phosphorylation at Ser-395 by ATR in response to genome instability and double-stranded DNA breaks primes LMNA for subsequent phosphorylation at Ser-392 by CDK1 and micronuclei envelope rupture. The rupture of micronuclear envelope triggers the cGAS-STING pathway thereby activating the type I interferon response and innate immunity. Post-translationally, acetylation by KAT8 is required for nuclear architecture. In terms of processing, sumoylation is necessary for the localization to the nuclear envelope.

It localises to the nucleus lamina. The protein localises to the nucleus envelope. Its subcellular location is the nucleus. The protein resides in the nucleoplasm. It is found in the nucleus matrix. Lamins are intermediate filament proteins that assemble into a filamentous meshwork, and which constitute the major components of the nuclear lamina, a fibrous layer on the nucleoplasmic side of the inner nuclear membrane. Lamins provide a framework for the nuclear envelope, bridging the nuclear envelope and chromatin, thereby playing an important role in nuclear assembly, chromatin organization, nuclear membrane and telomere dynamics. Lamin A and C also regulate matrix stiffness by conferring nuclear mechanical properties. The structural integrity of the lamina is strictly controlled by the cell cycle, as seen by the disintegration and formation of the nuclear envelope in prophase and telophase, respectively. Lamin A and C are present in equal amounts in the lamina of mammals. Also invoved in DNA repair: recruited by DNA repair proteins XRCC4 and IFFO1 to the DNA double-strand breaks (DSBs) to prevent chromosome translocation by immobilizing broken DNA ends. Required for normal development of peripheral nervous system and skeletal muscle and for muscle satellite cell proliferation. Required for osteoblastogenesis and bone formation. Also prevents fat infiltration of muscle and bone marrow, helping to maintain the volume and strength of skeletal muscle and bone. Required for cardiac homeostasis. In terms of biological role, prelamin-A/C can accelerate smooth muscle cell senescence. It acts to disrupt mitosis and induce DNA damage in vascular smooth muscle cells (VSMCs), leading to mitotic failure, genomic instability, and premature senescence. The polypeptide is Prelamin-A/C (LMNA) (Sus scrofa (Pig)).